The primary structure comprises 237 residues: Dihydroceramide fatty acyl 2-hydroxylase FAH2 (237 aa).

2 helical membrane-spanning segments follow: residues 54 to 74 (VWWA…SISA) and 77 to 97 (GLTF…WTLL). Zn(2+)-binding residues include histidine 102, histidine 107, histidine 123, histidine 126, and histidine 127. The next 2 helical transmembrane spans lie at 134–154 (LRLV…WKLL) and 156–176 (LLAT…GYVM). Positions 181, 185, 201, 204, and 205 each coordinate Zn(2+).

It belongs to the sterol desaturase family. As to quaternary structure, interacts with CYTB5-A, CYTB5-B, CYTB5-C and CYTB5-D. Zn(2+) serves as cofactor. As to expression, expressed in leaves, roots, flowers and seeds.

The protein resides in the endoplasmic reticulum membrane. It carries out the reaction an N-(1,2-saturated acyl)sphinganine + 2 Fe(II)-[cytochrome b5] + O2 + 2 H(+) = an N-[(2'R)-hydroxyacyl]sphinganine + 2 Fe(III)-[cytochrome b5] + H2O. In terms of biological role, fatty acid 2-hydroxylase involved in the alpha-hydroxylation of the long-chain fatty acid (LCFA) palmitic acid. Probably involved in the resistance response to oxidative stress. The protein is Dihydroceramide fatty acyl 2-hydroxylase FAH2 of Arabidopsis thaliana (Mouse-ear cress).